Consider the following 111-residue polypeptide: Disintegrin DS-AN (111 aa).

The first 20 residues, methionine 1 to cysteine 20, serve as a signal peptide directing secretion. The propeptide occupies isoleucine 21–methionine 47. Residues methionine 47–aspartate 111 enclose the Disintegrin domain. Intrachain disulfides connect cysteine 53-cysteine 76, cysteine 67-cysteine 73, cysteine 72-cysteine 97, and cysteine 85-cysteine 104. Positions arginine 89–aspartate 91 match the Cell attachment site motif.

As to quaternary structure, heterodimer; disulfide-linked.

Its subcellular location is the secreted. Functionally, inhibits ADP-induced platelet aggregation in human platelet-rich plasma (IC(50) is 8 uM). In Atheris nitschei (Great lakes bush viper), this protein is Disintegrin DS-AN.